We begin with the raw amino-acid sequence, 199 residues long: Ribonuclease HII (199 aa).

The region spanning 10–199 (HLVAGVDEVG…VKRALGLASN (190 aa)) is the RNase H type-2 domain. 3 residues coordinate a divalent metal cation: D16, E17, and D108.

The protein belongs to the RNase HII family. Requires Mn(2+) as cofactor. It depends on Mg(2+) as a cofactor.

The protein localises to the cytoplasm. The enzyme catalyses Endonucleolytic cleavage to 5'-phosphomonoester.. Functionally, endonuclease that specifically degrades the RNA of RNA-DNA hybrids. This is Ribonuclease HII from Klebsiella pneumoniae subsp. pneumoniae (strain ATCC 700721 / MGH 78578).